We begin with the raw amino-acid sequence, 359 residues long: Opine dehydrogenase (359 aa).

Belongs to the lysopine/nopaline/octopine/opine/vitopine dehydrogenases family. Homodimer.

The enzyme catalyses (2S)-2-[(R)-1-carboxyethylamino]pentanoate + NAD(+) + H2O = L-2-aminopentanoate + pyruvate + NADH + H(+). Its function is as follows. In the forward direction also acts on secondary amine dicarboxylates such as N-(1-carboxyethyl)methionine and N-(1-carboxyethyl)phenylalanine. In the reverse direction, the enzyme also acts on neutral amino acids as an amino donor. They include L-amino acids such as 2-aminopentanoic acid, 2-aminobutyric acid, 2-aminohexanoic acid, 3-chloroalanine, O-acetylserine, methionine, isoleucine, valine, phenylalanine, leucine and alanine. This Arthrobacter sp. (strain 1C) protein is Opine dehydrogenase (odh).